The sequence spans 1849 residues: Immunoglobulin A1 protease autotransporter (1849 aa).

Positions 1–25 (MLNKKFKLNFIALTVAYALTPYTEA) are cleaved as a signal peptide. The region spanning 26-343 (ALVRDDVDYQ…NIYKHEFAEK (318 aa)) is the Peptidase S6 domain. S299 is an active-site residue. Residues 998 to 1538 (VEKRNQTVDT…EPVELPTENA (541 aa)) form a disordered region. A compositionally biased stretch (polar residues) spans 1004-1015 (TVDTTNITTPND). Positions 1066-1077 (EETNTANSTETA) are enriched in low complexity. 2 stretches are compositionally biased toward polar residues: residues 1079–1097 (KSDT…VPSE) and 1138–1151 (VEAN…TQSE). Positions 1152–1166 (GKTEETQTAETKSEP) are enriched in basic and acidic residues. Residues 1167 to 1184 (TESVTVSENQPEKTVSQS) are compositionally biased toward polar residues. Residues 1185 to 1205 (TEDKVVVEKEEKAKVETEETQ) show a composition bias toward basic and acidic residues. The span at 1237 to 1268 (ALQQTQPTTVAAAETTSPNSKPAEETQQPSEK) shows a compositional bias: polar residues. The span at 1291–1301 (ETAKVEKEKTQ) shows a compositional bias: basic and acidic residues. Low complexity-rich tracts occupy residues 1314 to 1330 (QEQP…PQAE), 1345 to 1361 (PQPQ…VPTT), and 1369 to 1381 (KPAA…AKPQ). Residues 1388–1437 (NVSTVNTKEPQSQTSATVSTEQPAKETSSNVEQPAPENSINTGSATTMTE) are compositionally biased toward polar residues. The span at 1438-1457 (TAEKSDKPQMETVTENDRQP) shows a compositional bias: basic and acidic residues. Over residues 1493 to 1513 (EETTVASTQETTVDNSVSTPK) the composition is skewed to low complexity. Residues 1597–1849 (NNEGQYNVWI…TAEVKLSFSF (253 aa)) form the Autotransporter domain.

It localises to the periplasm. It is found in the secreted. The protein resides in the cell surface. Its subcellular location is the cell outer membrane. It carries out the reaction Cleavage of immunoglobulin A molecules at certain Pro-|-Xaa bonds in the hinge region. No small molecule substrates are known.. Functionally, virulence factor; cleaves host immunoglobulin A producing intact Fc and Fab fragments. The chain is Immunoglobulin A1 protease autotransporter (iga) from Haemophilus influenzae.